A 261-amino-acid polypeptide reads, in one-letter code: Kallikrein 1-related peptidase b1 (261 aa).

Residues 1–18 form the signal peptide; that stretch reads MWFLILFLALSLGGIDAA. The propeptide at 19 to 24 is activation peptide; sequence PPVQSR. In terms of domain architecture, Peptidase S1 spans 25–258; sequence IVGGFKCEKN…FTSWIKDTLA (234 aa). Disulfide bonds link Cys-31-Cys-173, Cys-50-Cys-66, Cys-152-Cys-219, Cys-184-Cys-198, and Cys-209-Cys-234. Residue His-65 is the Charge relay system of the active site. Asn-102 carries an N-linked (GlcNAc...) asparagine glycan. The Charge relay system role is filled by Asp-120. The active-site Charge relay system is Ser-213.

This sequence belongs to the peptidase S1 family. Kallikrein subfamily.

The catalysed reaction is Preferential cleavage of Arg-|-Xaa bonds in small molecule substrates. Highly selective action to release kallidin (lysyl-bradykinin) from kininogen involves hydrolysis of Met-|-Xaa or Leu-|-Xaa.. Glandular kallikreins cleave Met-Lys and Arg-Ser bonds in kininogen to release Lys-bradykinin. The protein is Kallikrein 1-related peptidase b1 (Klk1b1) of Mus musculus (Mouse).